A 420-amino-acid polypeptide reads, in one-letter code: Serine--tRNA ligase (420 aa).

Residue 225 to 227 participates in L-serine binding; it reads TLE. 256–258 is a binding site for ATP; the sequence is RQE. Glu279 contacts L-serine. Residue 343–346 coordinates ATP; the sequence is EVSS. Thr379 is a binding site for L-serine.

It belongs to the class-II aminoacyl-tRNA synthetase family. Type-1 seryl-tRNA synthetase subfamily. In terms of assembly, homodimer. The tRNA molecule binds across the dimer.

The protein localises to the cytoplasm. It carries out the reaction tRNA(Ser) + L-serine + ATP = L-seryl-tRNA(Ser) + AMP + diphosphate + H(+). The catalysed reaction is tRNA(Sec) + L-serine + ATP = L-seryl-tRNA(Sec) + AMP + diphosphate + H(+). It functions in the pathway aminoacyl-tRNA biosynthesis; selenocysteinyl-tRNA(Sec) biosynthesis; L-seryl-tRNA(Sec) from L-serine and tRNA(Sec): step 1/1. Functionally, catalyzes the attachment of serine to tRNA(Ser). Is also able to aminoacylate tRNA(Sec) with serine, to form the misacylated tRNA L-seryl-tRNA(Sec), which will be further converted into selenocysteinyl-tRNA(Sec). The chain is Serine--tRNA ligase from Mycoplasma pneumoniae (strain ATCC 29342 / M129 / Subtype 1) (Mycoplasmoides pneumoniae).